Consider the following 295-residue polypeptide: ATP synthase gamma chain (295 aa).

The protein belongs to the ATPase gamma chain family. In terms of assembly, F-type ATPases have 2 components, CF(1) - the catalytic core - and CF(0) - the membrane proton channel. CF(1) has five subunits: alpha(3), beta(3), gamma(1), delta(1), epsilon(1). CF(0) has three main subunits: a, b and c.

It is found in the cell inner membrane. Produces ATP from ADP in the presence of a proton gradient across the membrane. The gamma chain is believed to be important in regulating ATPase activity and the flow of protons through the CF(0) complex. This chain is ATP synthase gamma chain, found in Campylobacter curvus (strain 525.92).